A 254-amino-acid polypeptide reads, in one-letter code: Major prion protein (254 aa).

The N-terminal stretch at 1 to 22 (MANLSYWLLALFVATWTDVGLC) is a signal peptide. Positions 23–231 (KKRPKPGGWN…SQAYYDGRRS (209 aa)) are interaction with GRB2, ERI3 and SYN1. The tract at residues 25-108 (RPKPGGWNTG…WNKPNKPKTS (84 aa)) is disordered. A run of 5 repeats spans residues 51-59 (PQGGGTWGQ), 60-67 (PHGGGWGQ), 68-75 (PHGGGWGQ), 76-83 (PHGGGWGQ), and 84-91 (PHGGGWGQ). The segment at 51–91 (PQGGGTWGQPHGGGWGQPHGGGWGQPHGGGWGQPHGGGWGQ) is 5 X 8 AA tandem repeats of P-H-G-G-G-W-G-Q. Gly residues predominate over residues 52-95 (QGGGTWGQPHGGGWGQPHGGGWGQPHGGGWGQPHGGGWGQGGGT). Positions 61, 62, 63, 69, 70, 71, 77, 78, 79, 85, 86, and 87 each coordinate Cu(2+). The interval 90-231 (GQGGGTHNQW…SQAYYDGRRS (142 aa)) is prP27-30 (protease resistant core). A disulfide bond links cysteine 179 and cysteine 214. N-linked (GlcNAc...) asparagine glycans are attached at residues asparagine 181 and asparagine 197. A lipid anchor (GPI-anchor amidated serine) is attached at serine 231. The propeptide at 232-254 (SAVLFSSPPVILLISFLIFLIVG) is removed in mature form.

The protein belongs to the prion family. As to quaternary structure, monomer and homodimer. Has a tendency to aggregate into amyloid fibrils containing a cross-beta spine, formed by a steric zipper of superposed beta-strands. Soluble oligomers may represent an intermediate stage on the path to fibril formation. Copper binding may promote oligomerization. Interacts with GRB2, APP, ERI3/PRNPIP and SYN1. Mislocalized cytosolically exposed PrP interacts with MGRN1; this interaction alters MGRN1 subcellular location and causes lysosomal enlargement. Interacts with KIAA1191.

It localises to the cell membrane. It is found in the golgi apparatus. Functionally, its primary physiological function is unclear. Has cytoprotective activity against internal or environmental stresses. May play a role in neuronal development and synaptic plasticity. May be required for neuronal myelin sheath maintenance. May play a role in iron uptake and iron homeostasis. Soluble oligomers are toxic to cultured neuroblastoma cells and induce apoptosis (in vitro). Association with GPC1 (via its heparan sulfate chains) targets PRNP to lipid rafts. Also provides Cu(2+) or Zn(2+) for the ascorbate-mediated GPC1 deaminase degradation of its heparan sulfate side chains. The protein is Major prion protein (PRNP) of Nothocricetulus migratorius (Gray dwarf hamster).